Here is a 435-residue protein sequence, read N- to C-terminus: 3-ketoacyl-CoA thiolase (435 aa).

Residue Cys98 is the Acyl-thioester intermediate of the active site. Active-site proton acceptor residues include His391 and Cys421.

Belongs to the thiolase-like superfamily. Thiolase family. As to quaternary structure, heterotetramer of two alpha chains (FadJ) and two beta chains (FadI).

It is found in the cytoplasm. It catalyses the reaction an acyl-CoA + acetyl-CoA = a 3-oxoacyl-CoA + CoA. It functions in the pathway lipid metabolism; fatty acid beta-oxidation. Functionally, catalyzes the final step of fatty acid oxidation in which acetyl-CoA is released and the CoA ester of a fatty acid two carbons shorter is formed. This chain is 3-ketoacyl-CoA thiolase, found in Colwellia psychrerythraea (strain 34H / ATCC BAA-681) (Vibrio psychroerythus).